An 815-amino-acid chain; its full sequence is (E)-gamma-bisabolene synthase (815 aa).

Residues Asp-561, Asp-565, Asp-709, and Glu-717 each contribute to the Mg(2+) site. Residues 561–565 carry the DDXXD motif motif; that stretch reads DDMYD.

It belongs to the terpene synthase family. Tpsd subfamily. Requires Mg(2+) as cofactor. Mn(2+) is required as a cofactor.

The protein resides in the cytoplasm. It carries out the reaction (2E,6E)-farnesyl diphosphate = (E)-gamma-bisabolene + diphosphate. The protein operates within terpene metabolism; oleoresin biosynthesis. Its function is as follows. Involved in defensive oleoresin formation in conifers in response to insect attack or other injury. Involved in sesquiterpene (C15) olefins biosynthesis. Produces mainly (E)-gamma-bisabolene when used with farnesyl diphosphate as substrate. No activity with geranyl diphosphate or geranylgeranyl diphosphate. The protein is (E)-gamma-bisabolene synthase (TPS3) of Pseudotsuga menziesii (Douglas-fir).